Reading from the N-terminus, the 329-residue chain is Malate dehydrogenase (329 aa).

Position 11-17 (11-17 (GAAGQIG)) interacts with NAD(+). Substrate contacts are provided by Arg-92 and Arg-98. NAD(+) contacts are provided by residues Asn-105, Gln-112, and 129–131 (VGN). Positions 131 and 165 each coordinate substrate. His-190 (proton acceptor) is an active-site residue.

The protein belongs to the LDH/MDH superfamily. MDH type 2 family.

The catalysed reaction is (S)-malate + NAD(+) = oxaloacetate + NADH + H(+). Its function is as follows. Catalyzes the reversible oxidation of malate to oxaloacetate. The chain is Malate dehydrogenase from Laribacter hongkongensis (strain HLHK9).